The primary structure comprises 98 residues: Integration host factor subunit beta (98 aa).

It belongs to the bacterial histone-like protein family. In terms of assembly, heterodimer of an alpha and a beta chain.

Its function is as follows. This protein is one of the two subunits of integration host factor, a specific DNA-binding protein that functions in genetic recombination as well as in transcriptional and translational control. In Pseudomonas syringae pv. tomato (strain ATCC BAA-871 / DC3000), this protein is Integration host factor subunit beta.